The following is a 610-amino-acid chain: Estrogen receptor beta-2 (610 aa).

The tract at residues 1-170 (MSSSTGPAPA…GILGKGDTHF (170 aa)) is modulating. 2 consecutive NR C4-type zinc fingers follow at residues 171–191 (CAVC…CEGC) and 207–231 (CPAT…LRKC). Residues 171 to 236 (CAVCHDYASG…RLRKCYEVGM (66 aa)) constitute a DNA-binding region (nuclear receptor). Residues 302–538 (SPEQLVNCIL…DLLLEMLDAN (237 aa)) enclose the NR LBD domain. The disordered stretch occupies residues 566-596 (HTSKQQPALKESNQDTRHSPQAEGTVDKTLH). Positions 577 to 596 (SNQDTRHSPQAEGTVDKTLH) are enriched in basic and acidic residues.

Belongs to the nuclear hormone receptor family. NR3 subfamily. As to quaternary structure, binds DNA as a homodimer. Can form a heterodimer with ER-alpha. As to expression, predominantly expressed in pituitary, telencephalon and hypothalamus as well as in the liver.

The protein resides in the nucleus. Functionally, binds estrogens with an affinity similar to that of ER-alpha, and activates expression of reporter genes containing estrogen response elements (ERE) in an estrogen-dependent manner. The polypeptide is Estrogen receptor beta-2 (esr2b) (Carassius auratus (Goldfish)).